We begin with the raw amino-acid sequence, 124 residues long: U33-theraphotoxin-Cg1a (124 aa).

The signal sequence occupies residues Met1–Ala17. Disulfide bonds link Cys26–Cys37, Cys31–Cys51, Cys36–Cys75, Cys61–Cys83, and Cys77–Cys94. Residues Arg93–Gln108 show a composition bias toward basic and acidic residues. A disordered region spans residues Arg93 to Gly124. Over residues Gly109–Glu118 the composition is skewed to acidic residues.

Belongs to the neurotoxin 32 family. In terms of tissue distribution, expressed by the venom gland.

The protein resides in the secreted. In Chilobrachys guangxiensis (Chinese earth tiger tarantula), this protein is U33-theraphotoxin-Cg1a.